The primary structure comprises 847 residues: uncharacterized protein (847 aa).

The segment covering 116 to 126 (TGSSELTTSKT) has biased composition (polar residues). 3 disordered regions span residues 116–153 (TGSSELTTSKTPIDVDTKEQENRLKQKAEAAPKSTPIE), 208–245 (LKNFEDKSPPQAENASSSKKDEPISVECTDETSSRLSP), and 361–392 (DLEKNKESSSASLSTNKLAESPTEADKNSNVI). Residues 128–145 (IDVDTKEQENRLKQKAEA) show a composition bias toward basic and acidic residues. The span at 368–378 (SSSASLSTNKL) shows a compositional bias: polar residues.

This is an uncharacterized protein from Caenorhabditis elegans.